Here is a 633-residue protein sequence, read N- to C-terminus: Early transcription factor 70 kDa subunit (633 aa).

Residues 32–185 (RTILDHNESV…SNIISIMSDE (154 aa)) enclose the Helicase ATP-binding domain. Residue 45 to 52 (HIMGSGKT) coordinates ATP. Positions 135–138 (DEAH) match the DEXH box motif. The Helicase C-terminal domain occupies 326–505 (KFKYFIDTIG…TLPFDIKKLL (180 aa)).

Belongs to the helicase family. VETF subfamily. In terms of assembly, heterodimer of a 70 kDa and a 82 kDa subunit. Part of the early transcription complex composed of ETF, RAP94, and the DNA-directed RNA polymerase.

The protein localises to the virion. In terms of biological role, acts with RNA polymerase to initiate transcription from early gene promoters. Is recruited by the RPO-associated protein of 94 kDa (RAP94) to form the early transcription complex, which also contains the core RNA polymerase. ETF heterodimer binds to early gene promoters. The protein is Early transcription factor 70 kDa subunit (VETFS) of Vertebrata (FPV).